Reading from the N-terminus, the 347-residue chain is VIP36-like protein (347 aa).

An N-terminal signal peptide occupies residues Met1 to Ala43. Over Gly44–Ala312 the chain is Lumenal. The L-type lectin-like domain maps to Glu48–Leu273. Residues Ser92 and Asp127 each contribute to the a carbohydrate site. Ca(2+) is bound by residues Asp158, Tyr160, and Asn162. An a carbohydrate-binding site is contributed by Tyr160 to Asn162. N-linked (GlcNAc...) asparagine glycosylation is present at Asn180. A carbohydrate is bound at residue His187. Ca(2+) is bound at residue Asp190. Residues Cys199 and Cys236 are joined by a disulfide bond. Residue Gly257 to Leu259 coordinates a carbohydrate. Residues Leu313–Tyr335 traverse the membrane as a helical segment. Topologically, residues Asn336–Tyr347 are cytoplasmic. The Endoplasmic reticulum retention signal signature appears at Arg343–Arg345.

It is found in the endoplasmic reticulum membrane. The protein resides in the golgi apparatus membrane. May be involved in the regulation of export from the endoplasmic reticulum of a subset of glycoproteins. May function as a regulator of ERGIC-53. The protein is VIP36-like protein (Lman2l) of Mus musculus (Mouse).